We begin with the raw amino-acid sequence, 534 residues long: CTP synthase (534 aa).

Residues 1–266 form an amidoligase domain region; sequence MKTKFLFITG…DERIIDYLNI (266 aa). Position 14 (Ser14) interacts with CTP. Ser14 serves as a coordination point for UTP. Residues 15–20 and Asp72 contribute to the ATP site; that span reads SLGKGL. Mg(2+) is bound by residues Asp72 and Glu140. CTP is bound by residues 147–149, 187–192, and Lys223; these read DIE and KTKPTQ. Residues 187–192 and Lys223 each bind UTP; that span reads KTKPTQ. 239–241 contacts ATP; it reads RDV. Residues 291–533 enclose the Glutamine amidotransferase type-1 domain; that stretch reads TIAIVGKYVE…VGASLKHHGE (243 aa). Gly353 lines the L-glutamine pocket. Residue Cys380 is the Nucleophile; for glutamine hydrolysis of the active site. Residues 381 to 384, Glu404, and Arg461 contribute to the L-glutamine site; that span reads LGMQ. Active-site residues include His506 and Glu508.

The protein belongs to the CTP synthase family. Homotetramer.

The enzyme catalyses UTP + L-glutamine + ATP + H2O = CTP + L-glutamate + ADP + phosphate + 2 H(+). The catalysed reaction is L-glutamine + H2O = L-glutamate + NH4(+). It carries out the reaction UTP + NH4(+) + ATP = CTP + ADP + phosphate + 2 H(+). It participates in pyrimidine metabolism; CTP biosynthesis via de novo pathway; CTP from UDP: step 2/2. Allosterically activated by GTP, when glutamine is the substrate; GTP has no effect on the reaction when ammonia is the substrate. The allosteric effector GTP functions by stabilizing the protein conformation that binds the tetrahedral intermediate(s) formed during glutamine hydrolysis. Inhibited by the product CTP, via allosteric rather than competitive inhibition. Its function is as follows. Catalyzes the ATP-dependent amination of UTP to CTP with either L-glutamine or ammonia as the source of nitrogen. Regulates intracellular CTP levels through interactions with the four ribonucleotide triphosphates. The sequence is that of CTP synthase from Syntrophotalea carbinolica (strain DSM 2380 / NBRC 103641 / GraBd1) (Pelobacter carbinolicus).